Consider the following 196-residue polypeptide: Probable GTP-binding protein EngB (196 aa).

An EngB-type G domain is found at 22–196 (NLPEIALAGR…GNWIEDKISQ (175 aa)). GTP-binding positions include 30-37 (GRSNVGKS), 57-61 (GKTQT), 75-78 (DVPG), 142-145 (TKMD), and 175-177 (FSS). S37 and T59 together coordinate Mg(2+).

The protein belongs to the TRAFAC class TrmE-Era-EngA-EngB-Septin-like GTPase superfamily. EngB GTPase family. Mg(2+) is required as a cofactor.

Its function is as follows. Necessary for normal cell division and for the maintenance of normal septation. This is Probable GTP-binding protein EngB from Lactobacillus acidophilus (strain ATCC 700396 / NCK56 / N2 / NCFM).